The following is a 574-amino-acid chain: Ribonuclease Y (574 aa).

Residues methionine 1–leucine 21 traverse the membrane as a helical segment. One can recognise a KH domain in the interval alanine 264–leucine 327. Positions valine 390–alanine 483 constitute an HD domain.

Belongs to the RNase Y family.

It localises to the cell membrane. Its function is as follows. Endoribonuclease that initiates mRNA decay. This chain is Ribonuclease Y, found in Thermus thermophilus (strain ATCC BAA-163 / DSM 7039 / HB27).